Consider the following 342-residue polypeptide: C-X-C chemokine receptor type 6 (342 aa).

The Extracellular portion of the chain corresponds to 1–32; sequence MAEHDYHEDYGFNSFNDSSQEEHQDFLQFSKV. N-linked (GlcNAc...) asparagine glycosylation occurs at N16. Residues 33–59 traverse the membrane as a helical segment; that stretch reads FLPCMYLVVFVCGLVGNSLVLVISIFY. Topologically, residues 60–68 are cytoplasmic; the sequence is HKLQSLTDV. The helical transmembrane segment at 69 to 89 threads the bilayer; that stretch reads FLVNLPLADLVFVCTLPFWAY. At 90–103 the chain is on the extracellular side; it reads AGIHEWVFGQVMCK. The cysteines at positions 102 and 180 are disulfide-linked. Residues 104-125 form a helical membrane-spanning segment; it reads SLLGIYTINFYTSMLILTCITV. At 126-143 the chain is on the cytoplasmic side; sequence DRFIVVVKATKAYNQQAK. The helical transmembrane segment at 144-164 threads the bilayer; that stretch reads RMTWGKVTSLLIWVISLLVSL. The Extracellular segment spans residues 165 to 187; it reads PQIIYGNVFNLDKLICGYHDEAI. Residues 188–215 traverse the membrane as a helical segment; it reads STVVLATQMTLGFFLPLLTMIVCYSVII. Residues 216–231 are Cytoplasmic-facing; it reads KTLLHAGGFQKHRSLK. A helical transmembrane segment spans residues 232-259; it reads IIFLVMAVFLLTQMPFNLMKLIRSTHWE. Residues 260-275 lie on the Extracellular side of the membrane; sequence YYAMTSFHYTIMVTEA. The chain crosses the membrane as a helical span at residues 276–293; the sequence is IAYLRACLNPVLYAFVSL. Topologically, residues 294–342 are cytoplasmic; that stretch reads KFRKNFWKLVKDIGCLPYLGVSHQWKSSEDNSKTFSASHNVEATSMFQL.

It belongs to the G-protein coupled receptor 1 family.

The protein resides in the cell membrane. Its function is as follows. Receptor for the C-X-C chemokine CXCL16. Used as a coreceptor by SIVs and by strains of HIV-2 and m-tropic HIV-1. The polypeptide is C-X-C chemokine receptor type 6 (CXCR6) (Pan troglodytes (Chimpanzee)).